Reading from the N-terminus, the 153-residue chain is MPITDLVAPEAILPALKVNSKKQALQELAAKAAELTGQNERAVFEVLLQREKLGTTAVGYGVAIPHGKLPKLEKIFGLFARLDRPIDFESMDGQPVDLVFLLLAPEGAGADHLKALARIARLLRDQDIAKKLRASRDAQAIYSVLALPPATAA.

The 144-residue stretch at 5–148 folds into the PTS EIIA type-2 domain; the sequence is DLVAPEAILP…QAIYSVLALP (144 aa). The active-site Tele-phosphohistidine intermediate is the histidine 66.

The protein localises to the cytoplasm. Its function is as follows. Seems to have a role in regulating nitrogen assimilation. This Bradyrhizobium diazoefficiens (strain JCM 10833 / BCRC 13528 / IAM 13628 / NBRC 14792 / USDA 110) protein is Nitrogen regulatory protein (ptsN).